A 160-amino-acid chain; its full sequence is Small ribosomal subunit protein uS7 (160 aa).

It belongs to the universal ribosomal protein uS7 family. Part of the 30S ribosomal subunit. Contacts proteins S9 and S11.

In terms of biological role, one of the primary rRNA binding proteins, it binds directly to 16S rRNA where it nucleates assembly of the head domain of the 30S subunit. Is located at the subunit interface close to the decoding center, probably blocks exit of the E-site tRNA. The chain is Small ribosomal subunit protein uS7 from Anaplasma marginale (strain Florida).